The chain runs to 339 residues: Heat-inducible transcription repressor HrcA (339 aa).

It belongs to the HrcA family.

Its function is as follows. Negative regulator of class I heat shock genes (grpE-dnaK-dnaJ and groELS operons). Prevents heat-shock induction of these operons. The chain is Heat-inducible transcription repressor HrcA from Frankia casuarinae (strain DSM 45818 / CECT 9043 / HFP020203 / CcI3).